The following is a 258-amino-acid chain: tRNA pseudouridine synthase A (258 aa).

The active-site Nucleophile is aspartate 52. Tyrosine 110 is a binding site for substrate.

It belongs to the tRNA pseudouridine synthase TruA family. As to quaternary structure, homodimer.

The catalysed reaction is uridine(38/39/40) in tRNA = pseudouridine(38/39/40) in tRNA. Functionally, formation of pseudouridine at positions 38, 39 and 40 in the anticodon stem and loop of transfer RNAs. In Francisella philomiragia subsp. philomiragia (strain ATCC 25017 / CCUG 19701 / FSC 153 / O#319-036), this protein is tRNA pseudouridine synthase A.